The chain runs to 500 residues: Coiled-coil domain-containing protein 125 (500 aa).

A disordered region spans residues 1–105; the sequence is MSKVPRSSSE…TDSNSELSDE (105 aa). Positions 10–23 are enriched in acidic residues; the sequence is EAEDIWETEDDMTE. Positions 92-101 are enriched in polar residues; that stretch reads RLSSTDSNSE. 2 coiled-coil regions span residues 101 to 237 and 286 to 314; these read ELSD…LEAL and STRK…TADA. Ser-492 carries the post-translational modification Phosphoserine.

Expressed in many tissues, with highest levels in spleen, thymus and bone marrow.

It is found in the cytoplasm. Functionally, may be involved in the regulation of cell migration. This is Coiled-coil domain-containing protein 125 (Ccdc125) from Mus musculus (Mouse).